Consider the following 204-residue polypeptide: Synaptosomal-associated protein 25-A (204 aa).

Residues 1–11 are compositionally biased toward basic and acidic residues; the sequence is MAEDSDMRNEL. A disordered region spans residues 1–25; that stretch reads MAEDSDMRNELADMQQRADQLADES. 2 t-SNARE coiled-coil homology domains span residues 19 to 81 and 138 to 200; these read DQLA…LNDL and DARE…ATKM.

It belongs to the SNAP-25 family. As to expression, expressed in several regions throughout the adult brain, including the mesencephalon.

It localises to the synapse. The protein localises to the synaptosome. Its subcellular location is the cell membrane. Its function is as follows. May play an important role in the synaptic function of specific neuronal systems. Associates with proteins involved in vesicle docking and membrane fusion. The sequence is that of Synaptosomal-associated protein 25-A from Danio rerio (Zebrafish).